A 182-amino-acid polypeptide reads, in one-letter code: Probable RNA 2'-phosphotransferase (182 aa).

The protein belongs to the KptA/TPT1 family.

Removes the 2'-phosphate from RNA via an intermediate in which the phosphate is ADP-ribosylated by NAD followed by a presumed transesterification to release the RNA and generate ADP-ribose 1''-2''-cyclic phosphate (APPR&gt;P). May function as an ADP-ribosylase. This is Probable RNA 2'-phosphotransferase from Pseudomonas fluorescens (strain ATCC BAA-477 / NRRL B-23932 / Pf-5).